The sequence spans 145 residues: Peptide methionine sulfoxide reductase MsrB (145 aa).

A MsrB domain is found at 4–127 (SDELKQRIGE…NSAALKFIPY (124 aa)). Cys116 (nucleophile) is an active-site residue.

The protein belongs to the MsrB Met sulfoxide reductase family.

It carries out the reaction L-methionyl-[protein] + [thioredoxin]-disulfide + H2O = L-methionyl-(R)-S-oxide-[protein] + [thioredoxin]-dithiol. The sequence is that of Peptide methionine sulfoxide reductase MsrB from Streptococcus pyogenes serotype M3 (strain ATCC BAA-595 / MGAS315).